The following is a 71-amino-acid chain: Small ribosomal subunit protein bS21 (71 aa).

It belongs to the bacterial ribosomal protein bS21 family.

The sequence is that of Small ribosomal subunit protein bS21 from Psychromonas ingrahamii (strain DSM 17664 / CCUG 51855 / 37).